Reading from the N-terminus, the 155-residue chain is Riboflavin kinase (155 aa).

Residues Gly-15, Lys-21, Thr-27, and Asn-29 each contribute to the ATP site. Residues Thr-27 and Asn-29 each coordinate Mg(2+). Residue Glu-79 is the Nucleophile of the active site. Residues Ile-82, His-84, and Tyr-91 each coordinate ATP. FMN-binding residues include Arg-104, Lys-107, and Phe-109.

As to quaternary structure, monomer. Directly interacts with TNFRSF1A death domain; this interaction may be supported by TRADD. In the absence of TNFRSF1A, interacts with TRADD. Independently of TNFRSF1A, interacts with the NADPH oxidase subunit CYBA. Zn(2+) serves as cofactor. The cofactor is Mg(2+).

It localises to the cytoplasm. It carries out the reaction riboflavin + ATP = FMN + ADP + H(+). The protein operates within cofactor biosynthesis; FMN biosynthesis; FMN from riboflavin (ATP route): step 1/1. Catalyzes the phosphorylation of riboflavin (vitamin B2) to form flavin-mononucleotide (FMN), hence rate-limiting enzyme in the synthesis of FAD. Essential for TNF-induced reactive oxygen species (ROS) production. Through its interaction with both TNFRSF1A and CYBA, physically and functionally couples TNFRSF1A to NADPH oxidase. TNF-activation of RFK may enhance the incorporation of FAD in NADPH oxidase, a critical step for the assembly and activation of NADPH oxidase. The protein is Riboflavin kinase (Rfk) of Mus musculus (Mouse).